Consider the following 445-residue polypeptide: Argininosuccinate synthase (445 aa).

Residues 17 to 25 (AFSGGLDTS) and Ala43 contribute to the ATP site. L-citrulline is bound at residue Tyr99. Residues Gly129 and Thr131 each contribute to the ATP site. L-aspartate contacts are provided by Thr131, Asn135, and Asp136. Position 135 (Asn135) interacts with L-citrulline. Asp136 provides a ligand contact to ATP. 2 residues coordinate L-citrulline: Arg139 and Ser192. Asp194 contributes to the ATP binding site. The L-citrulline site is built by Thr201, Glu203, and Glu280.

Belongs to the argininosuccinate synthase family. Type 2 subfamily. In terms of assembly, homotetramer.

The protein localises to the cytoplasm. It carries out the reaction L-citrulline + L-aspartate + ATP = 2-(N(omega)-L-arginino)succinate + AMP + diphosphate + H(+). Its pathway is amino-acid biosynthesis; L-arginine biosynthesis; L-arginine from L-ornithine and carbamoyl phosphate: step 2/3. The polypeptide is Argininosuccinate synthase (Rhodopseudomonas palustris (strain BisA53)).